Consider the following 366-residue polypeptide: Phospho-N-acetylmuramoyl-pentapeptide-transferase (366 aa).

A run of 10 helical transmembrane segments spans residues 3-23 (QIFI…PVLI), 55-75 (IAIL…GLVF), 80-100 (PGVS…VGFA), 118-138 (AKLI…LQFP), 161-181 (IAVG…NIVI), 197-217 (LASG…FWQF), 235-255 (PLDL…FLWW), 262-282 (IFMG…LSIT), 287-307 (LLMI…VIQV), and 341-361 (FWLL…GEWL).

Belongs to the glycosyltransferase 4 family. MraY subfamily. It depends on Mg(2+) as a cofactor.

The protein localises to the cell membrane. It catalyses the reaction UDP-N-acetyl-alpha-D-muramoyl-L-alanyl-gamma-D-glutamyl-meso-2,6-diaminopimeloyl-D-alanyl-D-alanine + di-trans,octa-cis-undecaprenyl phosphate = di-trans,octa-cis-undecaprenyl diphospho-N-acetyl-alpha-D-muramoyl-L-alanyl-D-glutamyl-meso-2,6-diaminopimeloyl-D-alanyl-D-alanine + UMP. Its pathway is cell wall biogenesis; peptidoglycan biosynthesis. Functionally, catalyzes the initial step of the lipid cycle reactions in the biosynthesis of the cell wall peptidoglycan: transfers peptidoglycan precursor phospho-MurNAc-pentapeptide from UDP-MurNAc-pentapeptide onto the lipid carrier undecaprenyl phosphate, yielding undecaprenyl-pyrophosphoryl-MurNAc-pentapeptide, known as lipid I. This Corynebacterium urealyticum (strain ATCC 43042 / DSM 7109) protein is Phospho-N-acetylmuramoyl-pentapeptide-transferase.